The primary structure comprises 273 residues: Putative pyruvate, phosphate dikinase regulatory protein (273 aa).

149–156 (GPSRTSKT) lines the ADP pocket.

It belongs to the pyruvate, phosphate/water dikinase regulatory protein family. PDRP subfamily.

It carries out the reaction N(tele)-phospho-L-histidyl/L-threonyl-[pyruvate, phosphate dikinase] + ADP = N(tele)-phospho-L-histidyl/O-phospho-L-threonyl-[pyruvate, phosphate dikinase] + AMP + H(+). It catalyses the reaction N(tele)-phospho-L-histidyl/O-phospho-L-threonyl-[pyruvate, phosphate dikinase] + phosphate + H(+) = N(tele)-phospho-L-histidyl/L-threonyl-[pyruvate, phosphate dikinase] + diphosphate. Functionally, bifunctional serine/threonine kinase and phosphorylase involved in the regulation of the pyruvate, phosphate dikinase (PPDK) by catalyzing its phosphorylation/dephosphorylation. This chain is Putative pyruvate, phosphate dikinase regulatory protein, found in Rickettsia africae (strain ESF-5).